We begin with the raw amino-acid sequence, 215 residues long: LexA repressor (215 aa).

The H-T-H motif DNA-binding region spans 28-48; sequence RAEIAAELGFSSPNAAEEHLR. Catalysis depends on for autocatalytic cleavage activity residues S133 and K170.

This sequence belongs to the peptidase S24 family. As to quaternary structure, homodimer.

It catalyses the reaction Hydrolysis of Ala-|-Gly bond in repressor LexA.. In terms of biological role, represses a number of genes involved in the response to DNA damage (SOS response), including recA and lexA. In the presence of single-stranded DNA, RecA interacts with LexA causing an autocatalytic cleavage which disrupts the DNA-binding part of LexA, leading to derepression of the SOS regulon and eventually DNA repair. The polypeptide is LexA repressor (Burkholderia cenocepacia (strain ATCC BAA-245 / DSM 16553 / LMG 16656 / NCTC 13227 / J2315 / CF5610) (Burkholderia cepacia (strain J2315))).